The chain runs to 97 residues: Protein YukE (97 aa).

Residues 21–94 (VESQEVLNQV…ESTDQDIANQ (74 aa)) adopt a coiled-coil conformation.

This sequence belongs to the WXG100 family. sagEsxA-like subfamily. Homodimer.

It is found in the secreted. Its function is as follows. Required to deliver LXG toxins to target cells. This Bacillus subtilis (strain 168) protein is Protein YukE (yukE).